Here is a 55-residue protein sequence, read N- to C-terminus: Large ribosomal subunit protein bL33 (55 aa).

This sequence belongs to the bacterial ribosomal protein bL33 family.

This is Large ribosomal subunit protein bL33 from Photorhabdus laumondii subsp. laumondii (strain DSM 15139 / CIP 105565 / TT01) (Photorhabdus luminescens subsp. laumondii).